The following is a 169-amino-acid chain: Small ribosomal subunit protein uS5 (169 aa).

One can recognise an S5 DRBM domain in the interval 14-77; the sequence is LQEKVVEVRR…EDAKKNLIVV (64 aa).

The protein belongs to the universal ribosomal protein uS5 family. As to quaternary structure, part of the 30S ribosomal subunit. Contacts proteins S4 and S8.

Functionally, with S4 and S12 plays an important role in translational accuracy. Its function is as follows. Located at the back of the 30S subunit body where it stabilizes the conformation of the head with respect to the body. The sequence is that of Small ribosomal subunit protein uS5 from Clostridioides difficile (strain 630) (Peptoclostridium difficile).